Reading from the N-terminus, the 206-residue chain is MNSTCCSACKVMKCDCAPNCIFAPHFPLTNLETFERLHRIFGAGNVFKILANLDPIQRETAVNALCYEAEALERDPIFGCVGIFNHYKNQLQNLDEQINSAKNELAAIIGLDNVPQYSSIPMPADFLTNKFSLHPYIEKMEGLDEVQKKELMQLPPVDAQVIVNEMFRKRGNIKICGGHGDACASTSGGTSATQKTLPFPQNHNQP.

Positions 4-105 constitute an LOB domain; sequence TCCSACKVMK…EQINSAKNEL (102 aa). The interval 184–206 is disordered; that stretch reads ASTSGGTSATQKTLPFPQNHNQP.

This sequence belongs to the LOB domain-containing protein family.

The sequence is that of LOB domain-containing protein 35 (LBD35) from Arabidopsis thaliana (Mouse-ear cress).